The primary structure comprises 764 residues: Putative alpha-1,3-mannosyltransferase MNN13 (764 aa).

Residues 1-13 (MIKPILGTKKIRR) lie on the Cytoplasmic side of the membrane. A helical transmembrane segment spans residues 14 to 34 (VICIIIGLFCILLLIGIFKHN). Over 35–764 (STNSVNNEAS…YLGDVWVGKY (730 aa)) the chain is Lumenal. N-linked (GlcNAc...) asparagine glycosylation is found at Asn45 and Asn204.

The protein belongs to the MNN1/MNT family.

The protein resides in the golgi apparatus membrane. It functions in the pathway protein modification; protein glycosylation. Functionally, responsible for addition of the terminal mannose residues to the outer chain of core N-linked polysaccharides and to O-linked mannotriose. Implicated in late Golgi modifications. This Candida albicans (strain SC5314 / ATCC MYA-2876) (Yeast) protein is Putative alpha-1,3-mannosyltransferase MNN13 (MNN13).